The sequence spans 237 residues: uncharacterized protein (237 aa).

The GP-PDE domain occupies 4–237 (QFLIAHRGYS…VKFQIAAQLY (234 aa)).

This sequence to glycerophosphoryl diester phosphodiesterases (EC 3.1.4.46). To M.genitalium MG293.

This is an uncharacterized protein from Mycoplasma pneumoniae (strain ATCC 29342 / M129 / Subtype 1) (Mycoplasmoides pneumoniae).